A 219-amino-acid chain; its full sequence is Thiopurine S-methyltransferase (219 aa).

The S-adenosyl-L-methionine site is built by Trp10, Leu45, Glu66, and Arg123.

It belongs to the class I-like SAM-binding methyltransferase superfamily. TPMT family.

The protein resides in the cytoplasm. The enzyme catalyses S-adenosyl-L-methionine + a thiopurine = S-adenosyl-L-homocysteine + a thiopurine S-methylether.. The polypeptide is Thiopurine S-methyltransferase (Bordetella bronchiseptica (strain ATCC BAA-588 / NCTC 13252 / RB50) (Alcaligenes bronchisepticus)).